Here is a 313-residue protein sequence, read N- to C-terminus: Ribosomal protein L11 methyltransferase (313 aa).

S-adenosyl-L-methionine-binding residues include threonine 151, glycine 172, aspartate 194, and asparagine 245.

It belongs to the methyltransferase superfamily. PrmA family.

The protein resides in the cytoplasm. The enzyme catalyses L-lysyl-[protein] + 3 S-adenosyl-L-methionine = N(6),N(6),N(6)-trimethyl-L-lysyl-[protein] + 3 S-adenosyl-L-homocysteine + 3 H(+). Methylates ribosomal protein L11. The sequence is that of Ribosomal protein L11 methyltransferase from Nitrosomonas europaea (strain ATCC 19718 / CIP 103999 / KCTC 2705 / NBRC 14298).